A 742-amino-acid chain; its full sequence is Zinc finger protein 700 (742 aa).

Residues 1–20 form a disordered region; the sequence is MPCCSHRSCREDPGTSESRE. Residues 8 to 20 show a composition bias toward basic and acidic residues; that stretch reads SCREDPGTSESRE. Positions 24 to 104 constitute a KRAB domain; that stretch reads VAFEDVAVNF…KEDSHCGETF (81 aa). 9 consecutive C2H2-type zinc fingers follow at residues 194-216, 222-244, 250-272, 278-300, 306-328, 362-384, 390-412, 418-440, and 446-468; these read YACK…MVMH, YKCK…ERTH, YECK…ERTH, YECS…ERSH, YQCK…ERTH, YKCK…EKTH, YKCK…ERIH, YECK…GGTH, and YECK…GRTH. The C2H2-type 10; degenerate zinc finger occupies 474 to 502; that stretch reads YECKECGKAFRYVKHLQIHERTEKHIRMP. 8 C2H2-type zinc fingers span residues 508 to 530, 536 to 558, 564 to 586, 592 to 614, 620 to 642, 648 to 670, 676 to 698, and 704 to 726; these read YKCS…EKTH, YECN…ERTH, YECK…ERTH, YECK…GRTH, YECK…ERKH, and YECK…ARTH.

It belongs to the krueppel C2H2-type zinc-finger protein family.

The protein localises to the nucleus. In terms of biological role, may be involved in transcriptional regulation. The chain is Zinc finger protein 700 (ZNF700) from Homo sapiens (Human).